The primary structure comprises 213 residues: ATP phosphoribosyltransferase (213 aa).

This sequence belongs to the ATP phosphoribosyltransferase family. Short subfamily. In terms of assembly, heteromultimer composed of HisG and HisZ subunits.

The protein resides in the cytoplasm. It carries out the reaction 1-(5-phospho-beta-D-ribosyl)-ATP + diphosphate = 5-phospho-alpha-D-ribose 1-diphosphate + ATP. It participates in amino-acid biosynthesis; L-histidine biosynthesis; L-histidine from 5-phospho-alpha-D-ribose 1-diphosphate: step 1/9. Its function is as follows. Catalyzes the condensation of ATP and 5-phosphoribose 1-diphosphate to form N'-(5'-phosphoribosyl)-ATP (PR-ATP). Has a crucial role in the pathway because the rate of histidine biosynthesis seems to be controlled primarily by regulation of HisG enzymatic activity. This is ATP phosphoribosyltransferase from Listeria monocytogenes serotype 4a (strain HCC23).